The sequence spans 341 residues: MLVLGLETSCDETGVALYDSERGLLADALFSQIDLHRAYGGVVPELASRDHVKRMLPLIRQVLDEAGCVPTEIDAIAYTAGPGLVGALLVGASCAQALAFAWGIPALGVHHMEGHLLAPMLEKTPPQFPFVALLVSGGHTQLVQVDGIGQYTLLGESLDDAAGEAFDKTAKMMGLNYPGGPEIARLAEKGVAGRYTFPRPMCDRPGLMFSFSGLKTSALNTWQQSVSAGDDSEQARCDIALAFQQAVVETLTIKCKRALKQAGMKRLVIAGGVSANKALRTSLEKMLGDMKGDVFYARPEFCTDNGAMIAYAGCQRLQAGQHESLAISVQARWPMEQLSPL.

Fe cation contacts are provided by His-111 and His-115. Substrate-binding positions include 134-138, Asp-167, Gly-180, and Asn-276; that span reads LVSGG. A Fe cation-binding site is contributed by Asp-304.

It belongs to the KAE1 / TsaD family. It depends on Fe(2+) as a cofactor.

The protein localises to the cytoplasm. The catalysed reaction is L-threonylcarbamoyladenylate + adenosine(37) in tRNA = N(6)-L-threonylcarbamoyladenosine(37) in tRNA + AMP + H(+). Functionally, required for the formation of a threonylcarbamoyl group on adenosine at position 37 (t(6)A37) in tRNAs that read codons beginning with adenine. Is involved in the transfer of the threonylcarbamoyl moiety of threonylcarbamoyl-AMP (TC-AMP) to the N6 group of A37, together with TsaE and TsaB. TsaD likely plays a direct catalytic role in this reaction. This chain is tRNA N6-adenosine threonylcarbamoyltransferase, found in Pseudomonas fluorescens (strain SBW25).